The sequence spans 1070 residues: TSC22 domain family protein 1 (1070 aa).

Positions 1-98 (MHQPPESTAA…SQAQLQAQPL (98 aa)) are required for interaction with TGFBR1 and promotion of TGF-beta signaling. 5 disordered regions span residues 1–110 (MHQP…KKSG), 125–289 (ISSN…PASV), 458–487 (VTSERESTSGSSVSSSVSTRSHYTESVGSG), 604–637 (YSQAAPPVQTPLPGAPPPQQLQYGQQQPMVSTQM), and 830–858 (TSQVSSAGPSGMPSAPTNLVPPQNIAQTP). Residues 36–45 (GSASALNAAG) are compositionally biased toward low complexity. Residues 58–70 (FPPPSLLQPPPPA) show a composition bias toward pro residues. The span at 84 to 100 (SLNLLSQAQLQAQPLAP) shows a compositional bias: low complexity. Residues 133–142 (EDTESYDDLD) show a composition bias toward acidic residues. The segment covering 216–240 (HPHHLHHHHHIHHGHHLQHGHHHPS) has biased composition (basic residues). The span at 241–250 (HVAVASASIP) shows a compositional bias: low complexity. Polar residues predominate over residues 261-271 (KLSTTGSSDSI). At Ser-263 the chain carries Phosphoserine. Composition is skewed to low complexity over residues 272–289 (TPVAPTSAVSSSGSPASV) and 465–478 (TSGSSVSSSVSTRS). The span at 611-622 (VQTPLPGAPPPQ) shows a compositional bias: pro residues. Residues 830-845 (TSQVSSAGPSGMPSAP) are compositionally biased toward low complexity. A compositionally biased stretch (polar residues) spans 849–858 (VPPQNIAQTP). The leucine-zipper stretch occupies residues 1003–1024 (LKEQIKELIEKNSQLEQENNLL). The disordered stretch occupies residues 1034–1070 (AQFQAQLQTGSPPATTQPQGTTQPPAQPASQGSGPTA). Positions 1041-1070 (QTGSPPATTQPQGTTQPPAQPASQGSGPTA) are enriched in low complexity.

The protein belongs to the TSC-22/Dip/Bun family. In terms of assembly, forms homodimers. Forms heterodimers. Component of a complex composed of TSC22D1 (via N-terminus), TGFBR1 and TGFBR2; the interaction between TSC22D1 and TGFBR1 is inhibited by SMAD7 and promoted by TGFB1. Interacts with SMAD7; the interaction requires TGF-beta and the interaction is inhibited by TGFBR1. Interacts with TPT1/fortilin; interaction results in the destabilization of TSC22D1 protein and prevents TSC22D1-mediated apoptosis. Interacts with SMAD4 (via N-terminus). Interacts with ACVRL1/ALK1, ACVR1/ALK2, BMPR1A/ALK3, ACVR1B/ALK4, BMPR1B/ALK6, ACVR2A/ACTRII, and BMPR2. Interacts with SMAD6. Interacts with TFE3; the interaction is enhanced in the presence of TGF-beta. Forms a heterodimer with TSC22D4/THG1. As to quaternary structure, forms a heterodimer with TSC22D4/THG1. Interacts with histone H1-2. Interacts with GNL3.

The protein localises to the cytoplasm. It is found in the nucleus. Its subcellular location is the cell membrane. It localises to the mitochondrion. In terms of biological role, transcriptional repressor. Acts on the C-type natriuretic peptide (CNP) promoter. Acts to promote CASP3-mediated apoptosis. Positively regulates TGF-beta signaling by interacting with SMAD7 which inhibits binding of SMAD7 to TGFBR1, preventing recruitment of SMURF ubiquitin ligases to TGFBR1 and inhibiting SMURF-mediated ubiquitination and degradation of TGFBR1. Contributes to enhancement of TGF-beta signaling by binding to and modulating the transcription activator activity of SMAD4. Promotes TGF-beta-induced transcription of COL1A2; via its interaction with TFE3 at E-boxes in the gene proximal promoter. Plays a role in the repression of hematopoietic precursor cell growth. Promotes IL2 deprivation-induced apoptosis in T-lymphocytes, via repression of TSC22D3/GILZ transcription and activation of the caspase cascade. Its function is as follows. May act to negatively regulate TGFB3 signaling and thereby inhibit cell death in mammary gland cells. Positively regulates cell death in response to TGFB3 during mammary gland involution. The chain is TSC22 domain family protein 1 from Pongo abelii (Sumatran orangutan).